A 268-amino-acid polypeptide reads, in one-letter code: Casein kinase II subunit beta (268 aa).

The tract at residues 222–268 is disordered; that stretch reads LSNNNQNNQNNNINNNNNNNNNNNNNNNNNNNNQQNNNNQQNNNTNK. Residues 224-268 show a composition bias toward low complexity; that stretch reads NNNQNNQNNNINNNNNNNNNNNNNNNNNNNNQQNNNNQQNNNTNK.

It belongs to the casein kinase 2 subunit beta family. Casein kinase II/CK2 is a tetramer composed of two alpha subunit and two beta subunits.

Regulatory subunit of casein kinase II/CK2. As part of the kinase complex regulates the basal catalytic activity of the alpha subunit a constitutively active serine/threonine-protein kinase that phosphorylates a large number of substrates containing acidic residues C-terminal to the phosphorylated serine or threonine. This is Casein kinase II subunit beta (csnk2b) from Dictyostelium discoideum (Social amoeba).